Here is a 226-residue protein sequence, read N- to C-terminus: Adenosine 5'-phosphosulfate reductase (226 aa).

Positions 112, 113, 195, and 198 each coordinate [4Fe-4S] cluster. The Nucleophile; cysteine thiosulfonate intermediate role is filled by C221.

This sequence belongs to the PAPS reductase family. CysH subfamily. [4Fe-4S] cluster serves as cofactor.

Its subcellular location is the cytoplasm. It catalyses the reaction [thioredoxin]-disulfide + sulfite + AMP + 2 H(+) = adenosine 5'-phosphosulfate + [thioredoxin]-dithiol. Its pathway is sulfur metabolism; hydrogen sulfide biosynthesis; sulfite from sulfate. Functionally, catalyzes the formation of sulfite from adenosine 5'-phosphosulfate (APS) using thioredoxin as an electron donor. This chain is Adenosine 5'-phosphosulfate reductase, found in Bacillus anthracis (strain A0248).